The sequence spans 953 residues: Isoleucine--tRNA ligase (953 aa).

A 'HIGH' region motif is present at residues 58–68 (PYANGSIHIGH). Glutamate 577 is a binding site for L-isoleucyl-5'-AMP. Positions 618–622 (KMSKS) match the 'KMSKS' region motif. Residue lysine 621 participates in ATP binding. Zn(2+) contacts are provided by cysteine 916, cysteine 919, cysteine 936, and cysteine 939.

The protein belongs to the class-I aminoacyl-tRNA synthetase family. IleS type 1 subfamily. Monomer. Zn(2+) serves as cofactor.

It is found in the cytoplasm. It catalyses the reaction tRNA(Ile) + L-isoleucine + ATP = L-isoleucyl-tRNA(Ile) + AMP + diphosphate. Functionally, catalyzes the attachment of isoleucine to tRNA(Ile). As IleRS can inadvertently accommodate and process structurally similar amino acids such as valine, to avoid such errors it has two additional distinct tRNA(Ile)-dependent editing activities. One activity is designated as 'pretransfer' editing and involves the hydrolysis of activated Val-AMP. The other activity is designated 'posttransfer' editing and involves deacylation of mischarged Val-tRNA(Ile). The chain is Isoleucine--tRNA ligase from Aeromonas salmonicida (strain A449).